Here is a 192-residue protein sequence, read N- to C-terminus: ADP-ribose glycohydrolase AF_1521 (192 aa).

One can recognise a Macro domain in the interval 1–192 (MEVLFEAKVG…VALKVFERSL (192 aa)). Substrate-binding positions include 19 to 21 (GDI), 32 to 34 (AAN), 39 to 44 (HGGGVA), and 140 to 146 (VSAGIYG).

The enzyme catalyses 5-O-(ADP-D-ribosyl)-L-glutamyl-[protein] + H2O = L-glutamyl-[protein] + ADP-D-ribose + H(+). The catalysed reaction is 4-O-(ADP-D-ribosyl)-L-aspartyl-[protein] + H2O = L-aspartyl-[protein] + ADP-D-ribose + H(+). It carries out the reaction alpha-NAD(+) + H2O = ADP-D-ribose + nicotinamide + H(+). Its function is as follows. Removes ADP-ribose from aspartate and glutamate residues in proteins bearing a single ADP-ribose moiety. Inactive towards proteins bearing poly-ADP-ribose. Catalyzes removal of a phosphate group from ADP-ribose 1''-phosphate (Appr1p), but with low efficiency. The sequence is that of ADP-ribose glycohydrolase AF_1521 from Archaeoglobus fulgidus (strain ATCC 49558 / DSM 4304 / JCM 9628 / NBRC 100126 / VC-16).